The following is a 577-amino-acid chain: Arginine--tRNA ligase (577 aa).

Residues 122–132 carry the 'HIGH' region motif; sequence PNVAKEMHVGH.

It belongs to the class-I aminoacyl-tRNA synthetase family. As to quaternary structure, monomer.

It is found in the cytoplasm. The catalysed reaction is tRNA(Arg) + L-arginine + ATP = L-arginyl-tRNA(Arg) + AMP + diphosphate. The protein is Arginine--tRNA ligase of Escherichia coli O7:K1 (strain IAI39 / ExPEC).